The sequence spans 949 residues: MAQQYLPGQRWISDSEAELGLGTILTQDGRMLTVLYPATGETRQYATRSAPLTRVRFVPGDEITHFEGWKMTVREVDDVDGLLVYHGLTAQNEARTLPETQLSNFIQFRLASDRLFAGQIDPLAWFSLRYHTLQHQSAQLQSSLWGLGGVRAQPIAHQLHIAKEVADRIAPRVLLADEVGLGKTIEAGLIIHRQLLSGRASRVLILVPENLQHQWLVEMRRRFNLEVALFDAERFIESDASNPFEDTQLALVSLEWLKEDERAQDAAFAAGWDLLVVDEAHHLVWHPESASAEYRLVEQLAEVIPGVLLLTATPEQLGLDSHFARLRLLDPNRFHDLDAFRAESSSYQPVAEAVQELLDEGRLSQQAHQTIHDFLGAEGEALLAAATDGDIEASSRLIRELLDRHGTGRLLFRNTRAAVQGFPERQLHPYPLPCPAEYMELPLGEHAELYPEVAFQSQQEPADEQNRWWQFDPRVEWLIDTLKMLKKYKVLVICAHAETALDLEDALRVRSGIPATVFHEGMSILERDRAAAYFADEEFGAQVLICSEIGSEGRNFQFSHHLVLFDLPAHPDLLEQRIGRLDRIGQQHTIQLHVPYLETSPQERLFKWYHEALNAFLATCPTGNALQHQFGPRLLPLLEDGDDDTFQGLIDEARAERERLEAELHAGRDRLLELNSGGGEQGTALVDAIEEQDDQFALPIYMEQLFDAFGIDSEDHSENALVLRPSEKMLDASFPLGDDEAVTITYDREQALAREDMQFLTWEHPMVQGGMDLVLSGSMGNTAVALIKNKALKPGTVLLELLFVSEVVAPRALQLSRFLPPLALRCLLDGNGNDLAAKVAFDTLNDQLESVPRASANKFVQAQRDVLATQIAAAEAKIKPRHVERVAEAQRKLKAGLDEELARLVALQAVNPSVRDSEIEALRQQREDGLAALEKAALRLEAIRVLVAG.

Residues E164–N332 form the Helicase ATP-binding domain. Residue D177–T184 participates in ATP binding. A DEAH box motif is present at residues D278–H281. Residues R474 to H628 enclose the Helicase C-terminal domain.

It belongs to the SNF2/RAD54 helicase family. RapA subfamily. Interacts with the RNAP. Has a higher affinity for the core RNAP than for the holoenzyme. Its ATPase activity is stimulated by binding to RNAP.

Transcription regulator that activates transcription by stimulating RNA polymerase (RNAP) recycling in case of stress conditions such as supercoiled DNA or high salt concentrations. Probably acts by releasing the RNAP, when it is trapped or immobilized on tightly supercoiled DNA. Does not activate transcription on linear DNA. Probably not involved in DNA repair. This Stutzerimonas stutzeri (strain A1501) (Pseudomonas stutzeri) protein is RNA polymerase-associated protein RapA.